A 654-amino-acid chain; its full sequence is Acetyl-coenzyme A synthetase (654 aa).

CoA contacts are provided by residues 190 to 193 (RGGK) and Thr-313. ATP contacts are provided by residues 389–391 (GEP), 413–418 (DTWWQT), Asp-504, and Arg-519. Ser-527 serves as a coordination point for CoA. Arg-530 contributes to the ATP binding site. Residues Val-541, His-543, and Val-546 each coordinate Mg(2+). Lys-613 bears the N6-acetyllysine mark.

This sequence belongs to the ATP-dependent AMP-binding enzyme family. It depends on Mg(2+) as a cofactor. In terms of processing, acetylated. Deacetylation by the SIR2-homolog deacetylase activates the enzyme.

The enzyme catalyses acetate + ATP + CoA = acetyl-CoA + AMP + diphosphate. In terms of biological role, catalyzes the conversion of acetate into acetyl-CoA (AcCoA), an essential intermediate at the junction of anabolic and catabolic pathways. AcsA undergoes a two-step reaction. In the first half reaction, AcsA combines acetate with ATP to form acetyl-adenylate (AcAMP) intermediate. In the second half reaction, it can then transfer the acetyl group from AcAMP to the sulfhydryl group of CoA, forming the product AcCoA. The polypeptide is Acetyl-coenzyme A synthetase (Leptospira biflexa serovar Patoc (strain Patoc 1 / Ames)).